The sequence spans 496 residues: Trimethylamine methyltransferase MttB (496 aa).

Residue Pyl-331 is a non-standard amino acid, pyrrolysine.

Belongs to the trimethylamine methyltransferase family.

It carries out the reaction Co(I)-[trimethylamine-specific corrinoid protein] + trimethylamine + H(+) = methyl-Co(III)-[trimethylamine-specific corrinoid protein] + dimethylamine. Catalyzes the transfer of a methyl group from trimethylamine to the corrinoid cofactor of MttC. The polypeptide is Trimethylamine methyltransferase MttB (Desulfitobacterium hafniense (strain DSM 10664 / DCB-2)).